Here is a 154-residue protein sequence, read N- to C-terminus: UPF0178 protein ABC1688 (154 aa).

The protein belongs to the UPF0178 family.

The polypeptide is UPF0178 protein ABC1688 (Shouchella clausii (strain KSM-K16) (Alkalihalobacillus clausii)).